A 120-amino-acid chain; its full sequence is NAD(P)H-quinone oxidoreductase subunit 3, chloroplastic (120 aa).

3 helical membrane passes run 9–29 (IFWAFLIISSAIPILAFLISG), 64–84 (MFALVFVVFDVETVFLYPWAM), and 88–108 (VLGVPVFIEAFIFVLILIVGS).

It belongs to the complex I subunit 3 family. In terms of assembly, NDH is composed of at least 16 different subunits, 5 of which are encoded in the nucleus.

The protein resides in the plastid. Its subcellular location is the chloroplast thylakoid membrane. The enzyme catalyses a plastoquinone + NADH + (n+1) H(+)(in) = a plastoquinol + NAD(+) + n H(+)(out). The catalysed reaction is a plastoquinone + NADPH + (n+1) H(+)(in) = a plastoquinol + NADP(+) + n H(+)(out). Its function is as follows. NDH shuttles electrons from NAD(P)H:plastoquinone, via FMN and iron-sulfur (Fe-S) centers, to quinones in the photosynthetic chain and possibly in a chloroplast respiratory chain. The immediate electron acceptor for the enzyme in this species is believed to be plastoquinone. Couples the redox reaction to proton translocation, and thus conserves the redox energy in a proton gradient. The sequence is that of NAD(P)H-quinone oxidoreductase subunit 3, chloroplastic from Gossypium hirsutum (Upland cotton).